A 195-amino-acid chain; its full sequence is MNGFVNWYTASVKRSPRLTNGIMTGSLFGIGDVIAQVGFPEKKGQKYDLARTVRAVVYGSLIFSIIGDSWYKFLNQKVIVKPGKHWTNTAARVGCDQLLFAPVGIPMYYGVMSILEGKSLVDAKKKIEDNWWPTLVTNWYVWPAFQLINFSLVPVHHRLFSVNIISIFWNAFLSFKNSISPSDKKVPVNFPPVPE.

The next 4 membrane-spanning stretches (helical) occupy residues 21 to 39 (GIMT…QVGF), 55 to 71 (AVVY…DSWY), 98 to 115 (LLFA…MSIL), and 159 to 175 (LFSV…FLSF).

The protein belongs to the peroxisomal membrane protein PXMP2/4 family.

It is found in the mitochondrion inner membrane. May be involved in cellular response to stress. Required to maintain mitochondrial DNA (mtDNA) integrity and stability. This chain is Protein SYM1 (SYM1), found in Kluyveromyces lactis (strain ATCC 8585 / CBS 2359 / DSM 70799 / NBRC 1267 / NRRL Y-1140 / WM37) (Yeast).